The chain runs to 365 residues: uncharacterized protein (365 aa).

Belongs to the mycobacterial PPE family.

This is an uncharacterized protein from Mycobacterium tuberculosis (strain ATCC 25618 / H37Rv).